We begin with the raw amino-acid sequence, 228 residues long: Urease accessory protein UreF (228 aa).

The protein belongs to the UreF family. In terms of assembly, ureD, UreF and UreG form a complex that acts as a GTP-hydrolysis-dependent molecular chaperone, activating the urease apoprotein by helping to assemble the nickel containing metallocenter of UreC. The UreE protein probably delivers the nickel.

The protein resides in the cytoplasm. Required for maturation of urease via the functional incorporation of the urease nickel metallocenter. This Prochlorococcus marinus (strain MIT 9215) protein is Urease accessory protein UreF.